The sequence spans 541 residues: CTP synthase (541 aa).

Residues 1 to 265 (MTRFIFITGG…DAVVCRHFGL (265 aa)) form an amidoligase domain region. Ser13 contacts CTP. Ser13 lines the UTP pocket. ATP is bound at residue 14-19 (SLGKGL). Tyr54 lines the L-glutamine pocket. Residue Asp71 coordinates ATP. Mg(2+)-binding residues include Asp71 and Glu139. Residues 146–148 (DIE), 186–191 (KTKPTQ), and Lys222 contribute to the CTP site. Residues 186–191 (KTKPTQ) and Lys222 contribute to the UTP site. The 251-residue stretch at 290 to 540 (TIAIVGKYIS…IAAAVRQSRL (251 aa)) folds into the Glutamine amidotransferase type-1 domain. Residue Gly352 coordinates L-glutamine. Cys379 acts as the Nucleophile; for glutamine hydrolysis in catalysis. L-glutamine contacts are provided by residues 380 to 383 (FGMQ), Glu403, and Arg468. Catalysis depends on residues His513 and Glu515.

This sequence belongs to the CTP synthase family. As to quaternary structure, homotetramer.

It carries out the reaction UTP + L-glutamine + ATP + H2O = CTP + L-glutamate + ADP + phosphate + 2 H(+). The enzyme catalyses L-glutamine + H2O = L-glutamate + NH4(+). The catalysed reaction is UTP + NH4(+) + ATP = CTP + ADP + phosphate + 2 H(+). It functions in the pathway pyrimidine metabolism; CTP biosynthesis via de novo pathway; CTP from UDP: step 2/2. With respect to regulation, allosterically activated by GTP, when glutamine is the substrate; GTP has no effect on the reaction when ammonia is the substrate. The allosteric effector GTP functions by stabilizing the protein conformation that binds the tetrahedral intermediate(s) formed during glutamine hydrolysis. Inhibited by the product CTP, via allosteric rather than competitive inhibition. In terms of biological role, catalyzes the ATP-dependent amination of UTP to CTP with either L-glutamine or ammonia as the source of nitrogen. Regulates intracellular CTP levels through interactions with the four ribonucleotide triphosphates. The chain is CTP synthase from Paramagnetospirillum magneticum (strain ATCC 700264 / AMB-1) (Magnetospirillum magneticum).